The primary structure comprises 308 residues: Beta-1,3-galactosyltransferase 5 (308 aa).

The Cytoplasmic portion of the chain corresponds to 1–7 (MAHMKTR). The chain crosses the membrane as a helical; Signal-anchor for type II membrane protein span at residues 8-25 (LVYASILMMGALCLYFSM). The Lumenal portion of the chain corresponds to 26 to 308 (DSFRELPFVF…NSKEQDCPAV (283 aa)). N-linked (GlcNAc...) asparagine glycans are attached at residues N128, N172, and N229.

It belongs to the glycosyltransferase 31 family. In terms of tissue distribution, expressed in brain and kidney.

It is found in the golgi apparatus membrane. It catalyses the reaction a globoside Gb4Cer (d18:1(4E)) + UDP-alpha-D-galactose = a globoside GalGb4Cer (d18:1(4E)) + UDP + H(+). It functions in the pathway protein modification; protein glycosylation. Its function is as follows. Catalyzes the transfer of Gal to GlcNAc-based acceptors with a preference for the core3 O-linked glycan GlcNAc(beta1,3)GalNAc structure. Can use glycolipid LC3Cer as an efficient acceptor. Also catalyzes the transfer of Gal to the terminal GalNAc unit of the globoside GB4, thereby synthesizing the glycolipid GB5, also known as the stage-specific embryonic antigen-3 (SSEA-3). The sequence is that of Beta-1,3-galactosyltransferase 5 from Mus musculus (Mouse).